Reading from the N-terminus, the 329-residue chain is MLNLNKLFEIIEIDIQNSKKISELDKIRIKYLGKKGVLTAFMKKLKDFSYEDKKKHSIIINKKKQEIISKINIKKQKLSVYILEQRIKSETIDISLPGRRTEHGGFHPITNTIDYIKNFFLKLGFQSINSPEIEDEYHNFDALNISKYHPARDSHDTFWFDRNRLLRTQTSSMQIRIMKQEKPPIRFIFPGKVYRNDYDITHTPMFHQIEGLIVDKNINFSNLKWIIYKFLYDFFGKEVLIKFRPSYFPFTVPSAEVDIIDHNGKSLEILGCGMVHPNVLKNVNIDSKIYSACAFGLGIERIAMLRYGITDIRSFFENDIRFLKQFKYN.

The protein belongs to the class-II aminoacyl-tRNA synthetase family. Phe-tRNA synthetase alpha subunit type 1 subfamily. As to quaternary structure, tetramer of two alpha and two beta subunits. The cofactor is Mg(2+).

The protein localises to the cytoplasm. The enzyme catalyses tRNA(Phe) + L-phenylalanine + ATP = L-phenylalanyl-tRNA(Phe) + AMP + diphosphate + H(+). This Buchnera aphidicola subsp. Acyrthosiphon pisum (strain APS) (Acyrthosiphon pisum symbiotic bacterium) protein is Phenylalanine--tRNA ligase alpha subunit (pheS).